The sequence spans 459 residues: Glycosyl hydrolase family 109 protein (459 aa).

Residues 1-31 constitute a signal peptide (tat-type signal); it reads MHNIHRRHFLKAAGAVTAGLITANITASTHA. NAD(+)-binding positions include 64 to 65, aspartate 86, 135 to 138, 155 to 156, and asparagine 184; these read ER, WEWH, and EV. Substrate contacts are provided by residues tyrosine 213, arginine 232, 244 to 247, and tyrosine 326; that span reads YPTH. An NAD(+)-binding site is contributed by tyrosine 244.

The protein belongs to the Gfo/Idh/MocA family. Glycosyl hydrolase 109 subfamily. NAD(+) serves as cofactor. Post-translationally, predicted to be exported by the Tat system. The position of the signal peptide cleavage has not been experimentally proven.

Its function is as follows. Glycosidase. The protein is Glycosyl hydrolase family 109 protein of Shewanella putrefaciens (strain CN-32 / ATCC BAA-453).